Consider the following 304-residue polypeptide: Oxygen-dependent coproporphyrinogen-III oxidase (304 aa).

Residue Ser-95 coordinates substrate. Positions 99 and 109 each coordinate a divalent metal cation. The Proton donor role is filled by His-109. 111-113 (NVR) provides a ligand contact to substrate. A divalent metal cation contacts are provided by His-148 and His-178. The segment at 243–278 (YVEFNLVYDRGTLFGLQSGGRTESILMSLPPLVRWR) is important for dimerization. Substrate is bound at residue 261-263 (GGR).

It belongs to the aerobic coproporphyrinogen-III oxidase family. In terms of assembly, homodimer. It depends on a divalent metal cation as a cofactor.

The protein localises to the cytoplasm. It carries out the reaction coproporphyrinogen III + O2 + 2 H(+) = protoporphyrinogen IX + 2 CO2 + 2 H2O. Its pathway is porphyrin-containing compound metabolism; protoporphyrin-IX biosynthesis; protoporphyrinogen-IX from coproporphyrinogen-III (O2 route): step 1/1. Functionally, involved in the heme biosynthesis. Catalyzes the aerobic oxidative decarboxylation of propionate groups of rings A and B of coproporphyrinogen-III to yield the vinyl groups in protoporphyrinogen-IX. This is Oxygen-dependent coproporphyrinogen-III oxidase from Thioalkalivibrio sulfidiphilus (strain HL-EbGR7).